The following is a 550-amino-acid chain: Hydroxylamine reductase (550 aa).

Cys3, Cys6, Cys18, and Cys25 together coordinate [2Fe-2S] cluster. Hybrid [4Fe-2O-2S] cluster contacts are provided by His249, Glu273, Cys317, Cys405, Cys433, Cys458, Glu492, and Lys494. The residue at position 405 (Cys405) is a Cysteine persulfide.

This sequence belongs to the HCP family. Requires [2Fe-2S] cluster as cofactor. It depends on hybrid [4Fe-2O-2S] cluster as a cofactor.

The protein localises to the cytoplasm. It carries out the reaction A + NH4(+) + H2O = hydroxylamine + AH2 + H(+). Catalyzes the reduction of hydroxylamine to form NH(3) and H(2)O. In Escherichia coli (strain SE11), this protein is Hydroxylamine reductase.